Reading from the N-terminus, the 181-residue chain is ATP-dependent protease subunit HslV (181 aa).

The active site involves threonine 11. Positions 166, 169, and 172 each coordinate Na(+).

Belongs to the peptidase T1B family. HslV subfamily. In terms of assembly, a double ring-shaped homohexamer of HslV is capped on each side by a ring-shaped HslU homohexamer. The assembly of the HslU/HslV complex is dependent on binding of ATP.

The protein resides in the cytoplasm. The enzyme catalyses ATP-dependent cleavage of peptide bonds with broad specificity.. Allosterically activated by HslU binding. Protease subunit of a proteasome-like degradation complex believed to be a general protein degrading machinery. This chain is ATP-dependent protease subunit HslV, found in Chlorobaculum tepidum (strain ATCC 49652 / DSM 12025 / NBRC 103806 / TLS) (Chlorobium tepidum).